The primary structure comprises 117 residues: uncharacterized protein (117 aa).

The first 23 residues, 1 to 23 (MVSEAEFMAALAKFAETSATASA), serve as a signal peptide directing secretion.

This is an uncharacterized protein from Archaeoglobus fulgidus (strain ATCC 49558 / DSM 4304 / JCM 9628 / NBRC 100126 / VC-16).